Reading from the N-terminus, the 590-residue chain is NADH-ubiquinone oxidoreductase chain 5 (590 aa).

The next 15 helical transmembrane spans lie at 1-21, 31-51, 77-97, 104-124, 130-150, 167-187, 190-210, 230-250, 261-281, 314-336, 355-375, 398-418, 439-461, 466-486, and 568-588; these read MNLI…MSIM, LMVL…NNEL, LLFT…SLWY, INKF…IITA, LFIG…WWHG, IGDI…SINM, LMIQ…AAAT, TPVS…FLLI, IMLT…AAAA, AFLH…GSYI, LPMT…MPFL, IMIT…IMLF, HPLA…STLQ, VTMP…GVLL, and MIKN…LFIM.

It belongs to the complex I subunit 5 family.

The protein resides in the mitochondrion inner membrane. The catalysed reaction is a ubiquinone + NADH + 5 H(+)(in) = a ubiquinol + NAD(+) + 4 H(+)(out). Its function is as follows. Core subunit of the mitochondrial membrane respiratory chain NADH dehydrogenase (Complex I) that is believed to belong to the minimal assembly required for catalysis. Complex I functions in the transfer of electrons from NADH to the respiratory chain. The immediate electron acceptor for the enzyme is believed to be ubiquinone. The polypeptide is NADH-ubiquinone oxidoreductase chain 5 (MT-ND5) (Lycodon semicarinatus (Ryukyu odd-tooth snake)).